The chain runs to 338 residues: MKVYYENDADLALLADKKIAVLGFGSQGHAHALNLKDSGMNVCVGLKENSASWVKAEKAGLMVEKTAEAVKWADIIMVLIPDQVQKAVYENDIAPNLKPGDTLAFGHGFNIHYKQIVPPANVNVIMIAPKSPGHLVRRTFVEGAGVPCLIAVHQNVDGKAKDIALAWAKGLGGTKAGVIETNFKDETETDLFGEQAVLCGGSAELIKAGFDTLVEGGYPAELAYFECMHELKLIVDLYYEGGLSRMNYSVSDTAEYGGMTRGPRIITDEVRQNMRQVLKEVQDGTFAKEFIDECNSGYKSMEALRKSNREHKIEGVGEKLRGMMSWLFKKNPKADAGV.

Residues 1-181 form the KARI N-terminal Rossmann domain; the sequence is MKVYYENDAD…GGTKAGVIET (181 aa). NADP(+) contacts are provided by residues 24 to 27, K47, S50, S52, and 82 to 85; these read FGSQ and DQVQ. Residue H107 is part of the active site. G133 lines the NADP(+) pocket. The 146-residue stretch at 182–327 folds into the KARI C-terminal knotted domain; it reads NFKDETETDL…EKLRGMMSWL (146 aa). Mg(2+)-binding residues include D190, E194, E226, and E230. S251 is a binding site for substrate.

This sequence belongs to the ketol-acid reductoisomerase family. Mg(2+) is required as a cofactor.

The enzyme catalyses (2R)-2,3-dihydroxy-3-methylbutanoate + NADP(+) = (2S)-2-acetolactate + NADPH + H(+). It carries out the reaction (2R,3R)-2,3-dihydroxy-3-methylpentanoate + NADP(+) = (S)-2-ethyl-2-hydroxy-3-oxobutanoate + NADPH + H(+). It participates in amino-acid biosynthesis; L-isoleucine biosynthesis; L-isoleucine from 2-oxobutanoate: step 2/4. It functions in the pathway amino-acid biosynthesis; L-valine biosynthesis; L-valine from pyruvate: step 2/4. In terms of biological role, involved in the biosynthesis of branched-chain amino acids (BCAA). Catalyzes an alkyl-migration followed by a ketol-acid reduction of (S)-2-acetolactate (S2AL) to yield (R)-2,3-dihydroxy-isovalerate. In the isomerase reaction, S2AL is rearranged via a Mg-dependent methyl migration to produce 3-hydroxy-3-methyl-2-ketobutyrate (HMKB). In the reductase reaction, this 2-ketoacid undergoes a metal-dependent reduction by NADPH to yield (R)-2,3-dihydroxy-isovalerate. This is Ketol-acid reductoisomerase (NADP(+)) from Chloroherpeton thalassium (strain ATCC 35110 / GB-78).